The primary structure comprises 150 residues: Glycine cleavage system H-like protein gcvH2 (150 aa).

Positions 44 to 126 (VATVGLSSFG…PANNWMVKFK (83 aa)) constitute a Lipoyl-binding domain.

This sequence belongs to the GcvH family.

This is Glycine cleavage system H-like protein gcvH2 (gcvH2) from Dictyostelium discoideum (Social amoeba).